We begin with the raw amino-acid sequence, 314 residues long: Homoserine O-acetyltransferase (314 aa).

Cys-142 (acyl-thioester intermediate) is an active-site residue. Positions 163 and 192 each coordinate substrate. The active-site Proton acceptor is His-235. Glu-237 is a catalytic residue. Residue Arg-249 participates in substrate binding.

This sequence belongs to the MetA family.

It is found in the cytoplasm. The catalysed reaction is L-homoserine + acetyl-CoA = O-acetyl-L-homoserine + CoA. Its pathway is amino-acid biosynthesis; L-methionine biosynthesis via de novo pathway; O-acetyl-L-homoserine from L-homoserine: step 1/1. Transfers an acetyl group from acetyl-CoA to L-homoserine, forming acetyl-L-homoserine. The protein is Homoserine O-acetyltransferase of Streptococcus pneumoniae serotype 4 (strain ATCC BAA-334 / TIGR4).